Here is a 150-residue protein sequence, read N- to C-terminus: MFRGVTHLNLDAKGRMAFPSRYRDRLMGLCDGEVVATIDYESPCLMLYPLPDWEVLERDLVKLPSLNPQARRLQRLLIGHAHDLQLDGSGRVLLPQPLRDYANLDKKIVLVGQVHRFELWDAEAWEQARTDWLDEARQDGVPDELGSLTL.

2 consecutive SpoVT-AbrB domains span residues 5–52 and 81–124; these read VTHL…PLPD and AHDL…DAEA.

The protein belongs to the MraZ family. In terms of assembly, forms oligomers.

Its subcellular location is the cytoplasm. It is found in the nucleoid. The sequence is that of Transcriptional regulator MraZ from Alkalilimnicola ehrlichii (strain ATCC BAA-1101 / DSM 17681 / MLHE-1).